The following is a 660-amino-acid chain: Leucine-rich repeat transmembrane protein FLRT2 (660 aa).

The first 35 residues, 1–35, serve as a signal peptide directing secretion; sequence MGLQTTKWPGRGAFILKFWLIISLGLYLQVSKLLA. Disulfide bonds link Cys-36-Cys-42 and Cys-40-Cys-49. Residues 36 to 63 form the LRRNT domain; sequence CPSVCRCDRNFVYCNERSLTSVPLGIPE. Residues 36–540 lie on the Extracellular side of the membrane; it reads CPSVCRCDRN…QTTSHSMGSP (505 aa). LRR repeat units lie at residues 62 to 87, 88 to 108, 109 to 131, 132 to 157, 159 to 181, 183 to 202, 203 to 228, 229 to 251, 252 to 274, and 275 to 298; these read PEGVTVLYLHNNQINNAGFPAELHNV, QSVHTVYLYGNQLDEFPMNLP, KNVRVLHLQENNIQTISRAALAQ, LLKLEELHLDDNSISTVGVEDGAFRE, ISLKLLFLSKNHLSSVPVGLPVD, QELRVDENRIAVISDMAFQN, LTSLERLIVDGNLLTNKGIAEGTFSH, LTKLKEFSIVRNSLSHPPPDLPG, THLIRLYLQDNQINHIPLTAFAN, and LRKLERLDISNNQLRMLTQGVFDH. A glycan (N-linked (GlcNAc...) asparagine) is linked at Asn-202. Positions 310-362 constitute an LRRCT domain; it reads NPWFCDCSIKWVTEWLKYIPSSLNVRGFMCQGPEQVRGMAVRELNMNLLSCPT. Intrachain disulfides connect Cys-314/Cys-339 and Cys-316/Cys-360. Residues 371–396 are compositionally biased toward low complexity; it reads TPAPSTVSPTTQSPTLSVPSPSRGSV. The tract at residues 371–413 is disordered; sequence TPAPSTVSPTTQSPTLSVPSPSRGSVPPAPTPSKLPTIPDWDG. One can recognise a Fibronectin type-III domain in the interval 419 to 517; sequence PPISERIQLS…ICSEATTHAS (99 aa). Residues 541-561 traverse the membrane as a helical segment; it reads FLLAGLIGGAVIFVLVVLLSV. The Cytoplasmic portion of the chain corresponds to 562-660; that stretch reads FCWHMHKKGR…SVPDLEHCHT (99 aa).

As to quaternary structure, self-associates (via leucine-rich repeats), giving rise to homooligomers. Interacts with FGFR1. Interacts with FGFR2. Interacts (via extracellular domain) with ADGRL1/LPHN1. Interacts (via extracellular domain) with ADGRL3 (via olfactomedin-like domain). Interacts (via extracellular domain) with UNC5D (via the first Ig-like domain). Can also interact (via extracellular domain) with UNC5B, but with much lower affinity. Interacts (via extracellular domain) with FN1. Post-translationally, N-glycosylated. Proteolytic cleavage in the juxtamembrane region gives rise to a soluble ectodomain. Cleavage is probably effected by a metalloprotease. Detected in adult brain (at protein level).

It is found in the cell membrane. The protein resides in the endoplasmic reticulum membrane. It localises to the cell junction. Its subcellular location is the focal adhesion. The protein localises to the secreted. It is found in the extracellular space. The protein resides in the extracellular matrix. It localises to the synapse. Its subcellular location is the synaptosome. The protein localises to the microsome membrane. Functionally, functions in cell-cell adhesion, cell migration and axon guidance. Mediates cell-cell adhesion via its interactions with ADGRL3 and probably also other latrophilins that are expressed at the surface of adjacent cells. May play a role in the migration of cortical neurons during brain development via its interaction with UNC5D. Mediates axon growth cone collapse and plays a repulsive role in neuron guidance via its interaction with UNC5D, and possibly also other UNC-5 family members. Plays a role in fibroblast growth factor-mediated signaling cascades. Required for normal organization of the cardiac basement membrane during embryogenesis, and for normal embryonic epicardium and heart morphogenesis. The sequence is that of Leucine-rich repeat transmembrane protein FLRT2 from Mus musculus (Mouse).